Here is a 1322-residue protein sequence, read N- to C-terminus: Phosphoribosylformylglycinamidine synthase (1322 aa).

Residues 300 to 311 and A702 each bind ATP; that span reads GASTGAGGEIRD. The Mg(2+) site is built by D703, E742, N746, and D915. Residue S917 coordinates ATP. In terms of domain architecture, Glutamine amidotransferase type-1 spans 1073–1322; the sequence is VAILREQGIN…LFRNARAWVG (250 aa). Catalysis depends on C1166, which acts as the Nucleophile. Active-site residues include H1287 and E1289.

It in the N-terminal section; belongs to the FGAMS family. As to quaternary structure, monomer.

Its subcellular location is the cytoplasm. The catalysed reaction is N(2)-formyl-N(1)-(5-phospho-beta-D-ribosyl)glycinamide + L-glutamine + ATP + H2O = 2-formamido-N(1)-(5-O-phospho-beta-D-ribosyl)acetamidine + L-glutamate + ADP + phosphate + H(+). It functions in the pathway purine metabolism; IMP biosynthesis via de novo pathway; 5-amino-1-(5-phospho-D-ribosyl)imidazole from N(2)-formyl-N(1)-(5-phospho-D-ribosyl)glycinamide: step 1/2. Phosphoribosylformylglycinamidine synthase involved in the purines biosynthetic pathway. Catalyzes the ATP-dependent conversion of formylglycinamide ribonucleotide (FGAR) and glutamine to yield formylglycinamidine ribonucleotide (FGAM) and glutamate. The protein is Phosphoribosylformylglycinamidine synthase of Xylella fastidiosa (strain Temecula1 / ATCC 700964).